Here is a 140-residue protein sequence, read N- to C-terminus: NADPH-dependent 7-cyano-7-deazaguanine reductase (140 aa).

Residue Cys-49 is the Thioimide intermediate of the active site. Asp-56 functions as the Proton donor in the catalytic mechanism. Substrate is bound by residues 71-73 (IEL) and 90-91 (HE).

This sequence belongs to the GTP cyclohydrolase I family. QueF type 1 subfamily.

Its subcellular location is the cytoplasm. The enzyme catalyses 7-aminomethyl-7-carbaguanine + 2 NADP(+) = 7-cyano-7-deazaguanine + 2 NADPH + 3 H(+). It participates in tRNA modification; tRNA-queuosine biosynthesis. Its function is as follows. Catalyzes the NADPH-dependent reduction of 7-cyano-7-deazaguanine (preQ0) to 7-aminomethyl-7-deazaguanine (preQ1). The protein is NADPH-dependent 7-cyano-7-deazaguanine reductase of Prochlorococcus marinus (strain NATL2A).